The following is a 231-amino-acid chain: Putative 3-methyladenine DNA glycosylase (231 aa).

This sequence belongs to the DNA glycosylase MPG family.

In Pseudomonas fluorescens (strain Pf0-1), this protein is Putative 3-methyladenine DNA glycosylase.